A 529-amino-acid chain; its full sequence is MLYLLPLSVSCRVPGSPPAPRSRRFLDPGGGRGVGDGLGGVRVFRRRALRGTDVRSNTSSSSSRKGRHDDARHDGGYGDDGDAGALLASVRRLLLSGSAQDDAAEGEAEEDEQGQFPKRWAIVFLCFSAFLLCNMDRVNMSIAILPMSAEFGWNPQTVGLIQSSFFWGYLLTQIAGGIWADTVGGKTVLGFGVIWWSIATALTPFAAKLGLPFLLVTRAFMGVGEGVAMPAMNNILSKWVPVSERSRSLALVYSGMYLGSVTGLAFSPLLIHNFGWPSVFYSFGSLGVFWFSTWASKAYSSPLEDPGISAEEKKLITSQTTGGEPVKEIPWGLILSKPPVWALIVSHFCHNWGTFILLTWMPTYYNQVLKFNLTESGLFCVLPWLTMAVSANFGGWIADTLVSRGLSVTTVRKIMQSIGFLGPAFFLTQLSHIDSPAMAVLCMACSQGTDAFSQSGLYSNHQDIGPRYAGVLLGLSNTAGVLAGVFGTAATGYILQHGSWDDVFKVSVVLYLVGTLVWNLFSTGEKIID.

The N-terminal 55 residues, 1–55 (MLYLLPLSVSCRVPGSPPAPRSRRFLDPGGGRGVGDGLGGVRVFRRRALRGTDVR), are a transit peptide targeting the chloroplast. Disordered stretches follow at residues 13–39 (VPGS…DGLG) and 52–78 (TDVR…GGYG). Over residues 28-39 (PGGGRGVGDGLG) the composition is skewed to gly residues. Basic and acidic residues predominate over residues 67-76 (RHDDARHDGG). The next 11 helical transmembrane spans lie at 120-140 (WAIV…RVNM), 158-178 (VGLI…AGGI), 187-207 (TVLG…PFAA), 209-229 (LGLP…GVAM), 251-271 (LVYS…PLLI), 274-294 (FGWP…FSTW), 340-360 (VWAL…LLTW), 378-398 (LFCV…GWIA), 418-438 (IGFL…SPAM), 469-489 (AGVL…FGTA), and 503-523 (VFKV…LFST).

The protein belongs to the major facilitator superfamily. Sodium/anion cotransporter (TC 2.A.1.14) family.

It is found in the plastid. It localises to the chloroplast membrane. Probable anion transporter. This chain is Probable anion transporter 1, chloroplastic (PHT4;1), found in Oryza sativa subsp. japonica (Rice).